Consider the following 128-residue polypeptide: Large ribosomal subunit protein bL12c (128 aa).

The protein belongs to the bacterial ribosomal protein bL12 family. As to quaternary structure, homodimer. Part of the ribosomal stalk of the 50S ribosomal subunit. Forms a multimeric L10(L12)X complex, where L10 forms an elongated spine to which 2 to 4 L12 dimers bind in a sequential fashion. Binds GTP-bound translation factors.

It is found in the plastid. The protein resides in the chloroplast. Forms part of the ribosomal stalk which helps the ribosome interact with GTP-bound translation factors. Is thus essential for accurate translation. The chain is Large ribosomal subunit protein bL12c from Phaeodactylum tricornutum (strain CCAP 1055/1).